Here is a 188-residue protein sequence, read N- to C-terminus: Ion-translocating oxidoreductase complex subunit B (188 aa).

Residues 1 to 26 (MNGVFLAIGALLPICLAGGALLGYAA) are hydrophobic. The region spanning 32-90 (QGDPVAEQVNALLPQTQCGQCGYPGCKPYAEAIAAGDKINKCPPGGEATIRALADLLDL) is the 4Fe-4S domain. [4Fe-4S] cluster contacts are provided by cysteine 49, cysteine 52, cysteine 57, cysteine 73, cysteine 113, cysteine 116, cysteine 119, cysteine 123, cysteine 143, cysteine 146, cysteine 149, and cysteine 153. 4Fe-4S ferredoxin-type domains lie at 104-133 (RVAY…GAAR) and 134-163 (LMHT…MREI).

Belongs to the 4Fe4S bacterial-type ferredoxin family. RnfB subfamily. The complex is composed of six subunits: RnfA, RnfB, RnfC, RnfD, RnfE and RnfG. Requires [4Fe-4S] cluster as cofactor.

Its subcellular location is the cell inner membrane. Part of a membrane-bound complex that couples electron transfer with translocation of ions across the membrane. The protein is Ion-translocating oxidoreductase complex subunit B of Pseudomonas aeruginosa (strain LESB58).